A 119-amino-acid polypeptide reads, in one-letter code: Large ribosomal subunit protein bL20 (119 aa).

This sequence belongs to the bacterial ribosomal protein bL20 family.

Functionally, binds directly to 23S ribosomal RNA and is necessary for the in vitro assembly process of the 50S ribosomal subunit. It is not involved in the protein synthesizing functions of that subunit. The protein is Large ribosomal subunit protein bL20 of Deinococcus geothermalis (strain DSM 11300 / CIP 105573 / AG-3a).